We begin with the raw amino-acid sequence, 449 residues long: MFS-type transporter hasB (449 aa).

12 consecutive transmembrane segments (helical) span residues 44–64 (VAGS…CGIF), 80–100 (ALAW…PAVG), 112–132 (LPPF…CTKY), 135–155 (VMLA…LPAM), 168–188 (LAVG…PCML), 195–215 (VGFA…LFIA), 255–275 (LPWG…FAPL), 296–316 (AIAN…SDII), 322–342 (MCIV…PLEF), 346–366 (LAGI…FVSL), 387–407 (GGFC…EGAI), and 415–435 (FTGL…CTGT).

The protein belongs to the major facilitator superfamily. Monocarboxylate porter (TC 2.A.1.13) family.

The protein resides in the membrane. Functionally, MFS-type transporter; part of the gene cluster that mediates the biosynthesis of hexadehydro-astechrome (HAS), a tryptophan-derived iron(III)-complex that acts as a virulence factor in infected mice. Required for the production of HAS. The chain is MFS-type transporter hasB from Aspergillus fumigatus (strain CBS 144.89 / FGSC A1163 / CEA10) (Neosartorya fumigata).